A 197-amino-acid chain; its full sequence is Auxin-responsive protein IAA19 (197 aa).

Residues 13-17 (LRLGL) carry the EAR-like (transcriptional repression) motif. The segment covering 35-47 (MNMTSSGSNSDQC) has biased composition (polar residues). Residues 35-67 (MNMTSSGSNSDQCESGVVSSGGDAEKVNDSPAA) form a disordered region. Positions 96–184 (LGYVKVSMDG…KRLRIMKRSD (89 aa)) constitute a PB1 domain.

The protein belongs to the Aux/IAA family. In terms of assembly, homodimers and heterodimers. Interacts with the auxin response factor ARF7.

Its subcellular location is the nucleus. Functionally, aux/IAA proteins are short-lived transcriptional factors that function as repressors of early auxin response genes at low auxin concentrations. Repression is thought to result from the interaction with auxin response factors (ARFs), proteins that bind to the auxin-responsive promoter element (AuxRE). Formation of heterodimers with ARF proteins may alter their ability to modulate early auxin response genes expression. In Arabidopsis thaliana (Mouse-ear cress), this protein is Auxin-responsive protein IAA19 (IAA19).